The following is a 358-amino-acid chain: Glucose 1-dehydrogenase (358 aa).

C38 provides a ligand contact to Zn(2+). T40 contacts substrate. Residues H65, E66, C92, C95, C98, and C106 each contribute to the Zn(2+) site. The substrate site is built by E113, E149, and N153. E149 is a Zn(2+) binding site. Residues 187–190 (SGPI), 209–211 (NRR), 268–270 (FGT), 296–298 (SVN), and K342 each bind NADP(+). A substrate-binding site is contributed by N298.

Belongs to the zinc-containing alcohol dehydrogenase family. Glucose 1-dehydrogenase subfamily. Zn(2+) is required as a cofactor.

The enzyme catalyses D-glucose + NAD(+) = D-glucono-1,5-lactone + NADH + H(+). The catalysed reaction is D-glucose + NADP(+) = D-glucono-1,5-lactone + NADPH + H(+). Functionally, catalyzes the NAD(P)(+)-dependent oxidation of D-glucose to D-gluconate via gluconolactone. Can utilize both NAD(+) and NADP(+) as electron acceptor. Is involved in the degradation of glucose through a non-phosphorylative variant of the Entner-Doudoroff pathway. This Metallosphaera sedula (strain ATCC 51363 / DSM 5348 / JCM 9185 / NBRC 15509 / TH2) protein is Glucose 1-dehydrogenase.